Here is a 328-residue protein sequence, read N- to C-terminus: MADIYPWQQALWSQLGGRAQHAHAYLLYGPAGIGKRALAEHWAAQLLCQRPAAAGACGECKACQLLAAGTHPDYFVLEPEEAEKPIRVDQVRDLVGFVVQTAQLGGRKVVLLEPAEAMNVNAANALLKSLEEPSGDTVLLLISHQPSRLLPTIKSRCVQQACPLPGAAASLEWLARALPDEPAEALEELLALSGGSPLTAQRLHGQGVREQRAQVVEGVKKLLKQQIAASPLAESWNSVPLPLLFDWFCDWTLGILRYQLTHDEEGLGLADMRKVIQYLGDKSGQAKVLAMQDWLLQQRQKVLNKANLNRVLLLEALLVQWASLPGPG.

DNA polymerase III contains a core (composed of alpha, epsilon and theta chains) that associates with a tau subunit. This core dimerizes to form the POLIII' complex. PolIII' associates with the gamma complex (composed of gamma, delta, delta', psi and chi chains) and with the beta chain to form the complete DNA polymerase III complex.

It catalyses the reaction DNA(n) + a 2'-deoxyribonucleoside 5'-triphosphate = DNA(n+1) + diphosphate. In terms of biological role, DNA polymerase III is a complex, multichain enzyme responsible for most of the replicative synthesis in bacteria. This DNA polymerase also exhibits 3' to 5' exonuclease activity. The polypeptide is DNA polymerase III subunit delta' (holB) (Pseudomonas aeruginosa (strain ATCC 15692 / DSM 22644 / CIP 104116 / JCM 14847 / LMG 12228 / 1C / PRS 101 / PAO1)).